Here is an 858-residue protein sequence, read N- to C-terminus: Phospholipase D gamma 1 (858 aa).

The C2 domain occupies P27–F163. D225 is a binding site for Ca(2+). The PLD phosphodiesterase 1 domain maps to T364 to R399. Catalysis depends on residues H369, K371, and D376. Residue H369 participates in a 1,2-diacyl-sn-glycero-3-phosphate binding. Positions 405 and 437 each coordinate Ca(2+). Q565 provides a ligand contact to a 1,2-diacyl-sn-glycero-3-phosphate. S680 carries the phosphoserine modification. Positions F704 to S731 constitute a PLD phosphodiesterase 2 domain. Catalysis depends on residues H709, K711, and D716. H709 serves as a coordination point for a 1,2-diacyl-sn-glycero-3-phosphate. A Ca(2+)-binding site is contributed by E772.

This sequence belongs to the phospholipase D family. C2-PLD subfamily. Requires Ca(2+) as cofactor. Highly expressed in roots and flowers, moderately in stems, leaves and seedlings and low in siliques. Not detected in seeds.

The protein resides in the cytoplasm. The protein localises to the membrane. It catalyses the reaction a 1,2-diacyl-sn-glycero-3-phosphocholine + H2O = a 1,2-diacyl-sn-glycero-3-phosphate + choline + H(+). With respect to regulation, inhibited by neomycin. Up-regulated by PIP2 binding. Hydrolyzes glycerol-phospholipids at the terminal phosphodiesteric bond to generate phosphatidic acids (PA). Plays an important role in various cellular processes, including phytohormone action, vesicular trafficking, secretion, cytoskeletal arrangement, meiosis, tumor promotion, pathogenesis, membrane deterioration and senescence. Can use phosphatidylserine (PS) and phosphatidylethanolamine (PE) as substrates only in the presence of PIP2. Can use phosphatidylcholine (PC), phosphatidylglycerol (PG) or N-acylphosphatidylethanolamine (NAPE) as substrates in the presence of PE and PIP2. Involved in membrane lipid modulation under aluminum (Al) stress and negatively modulate plant tolerance to Al. The polypeptide is Phospholipase D gamma 1 (Arabidopsis thaliana (Mouse-ear cress)).